Here is a 46-residue protein sequence, read N- to C-terminus: uncharacterized protein (46 aa).

The protein to equivalent protein in phage 82.

This is an uncharacterized protein from Escherichia coli (strain K12).